The chain runs to 389 residues: Phospho-N-acetylmuramoyl-pentapeptide-transferase (389 aa).

The next 10 membrane-spanning stretches (helical) occupy residues 25–45 (RAVM…PAVI), 73–93 (TMGG…WADL), 97–117 (FIWI…VDDY), 135–155 (FWQS…VSEA), 190–210 (ISYP…IVGA), 222–242 (GLVI…AYVM), 259–279 (AGEL…FLWF), 287–307 (FMGD…AVIV), 311–331 (IVLF…MLQV), and 366–386 (QVVV…LSTL).

It belongs to the glycosyltransferase 4 family. MraY subfamily. The cofactor is Mg(2+).

Its subcellular location is the cell inner membrane. The enzyme catalyses UDP-N-acetyl-alpha-D-muramoyl-L-alanyl-gamma-D-glutamyl-meso-2,6-diaminopimeloyl-D-alanyl-D-alanine + di-trans,octa-cis-undecaprenyl phosphate = di-trans,octa-cis-undecaprenyl diphospho-N-acetyl-alpha-D-muramoyl-L-alanyl-D-glutamyl-meso-2,6-diaminopimeloyl-D-alanyl-D-alanine + UMP. It functions in the pathway cell wall biogenesis; peptidoglycan biosynthesis. Functionally, catalyzes the initial step of the lipid cycle reactions in the biosynthesis of the cell wall peptidoglycan: transfers peptidoglycan precursor phospho-MurNAc-pentapeptide from UDP-MurNAc-pentapeptide onto the lipid carrier undecaprenyl phosphate, yielding undecaprenyl-pyrophosphoryl-MurNAc-pentapeptide, known as lipid I. The sequence is that of Phospho-N-acetylmuramoyl-pentapeptide-transferase from Paraburkholderia xenovorans (strain LB400).